The sequence spans 164 residues: MSRIIHSEDDDDDDVGSQSSSSLSSPSKSLQQDPIPTKIPLSTSIILEKKLPLEQHQKLSNLTEGSTAGGHVSNNSLDNKIMIRFVPIGSTPSIQPRVFKISATQTVSTLNRFLCKKLKFKGVLNLYIQNSFMPLPDEQIGSLYGLFKTNNELIISYCNTIAFG.

The interval 1–36 is disordered; it reads MSRIIHSEDDDDDDVGSQSSSSLSSPSKSLQQDPIP. Residues 16-29 show a composition bias toward low complexity; the sequence is GSQSSSSLSSPSKS. A Glycyl lysine isopeptide (Gly-Lys) (interchain with K-148 in ATG5) cross-link involves residue G164.

Belongs to the ATG12 family. Forms a conjugate with ATG5.

It localises to the preautophagosomal structure membrane. In terms of biological role, ubiquitin-like protein involved in cytoplasm to vacuole transport (Cvt), autophagy vesicles formation, mitophagy, and nucleophagy. Conjugation with ATG5 through a ubiquitin-like conjugating system involving also ATG7 as an E1-like activating enzyme and ATG10 as an E2-like conjugating enzyme, is essential for its function. The ATG12-ATG5 conjugate functions as an E3-like enzyme which is required for lipidation of ATG8 and ATG8 association to the vesicle membranes. The protein is Ubiquitin-like protein ATG12 (ATG12) of Candida albicans (strain SC5314 / ATCC MYA-2876) (Yeast).